Consider the following 187-residue polypeptide: MPKPTKGPRLGGGPAHERLMLANLAQSLFEHKSIKTTETKAKRLRPVAERLVTFAKRGDLHARRRVMGIIPSKSVVHELFTEIAPLVAERDGGYTRITKLGFRKGDNAPMVQIELVLEPVTPKVRSSRTSTATAPVAAAPVAEAPAEESDVPVEETDAVEHTDETPAETTDAAAAEVEADAAEKSDK.

Residues 122 to 187 (PKVRSSRTST…EADAAEKSDK (66 aa)) are disordered. The segment covering 127–144 (SRTSTATAPVAAAPVAEA) has biased composition (low complexity). Positions 145 to 157 (PAEESDVPVEETD) are enriched in acidic residues. A compositionally biased stretch (low complexity) spans 167–176 (AETTDAAAAE).

Belongs to the bacterial ribosomal protein bL17 family. As to quaternary structure, part of the 50S ribosomal subunit. Contacts protein L32.

The polypeptide is Large ribosomal subunit protein bL17 (Clavibacter sepedonicus (Clavibacter michiganensis subsp. sepedonicus)).